Reading from the N-terminus, the 694-residue chain is Transcription activator of gluconeogenesis Pc22g08580 (694 aa).

The disordered stretch occupies residues 1–61; sequence MNMETKNGSP…DPSRPRRKKA (61 aa). Positions 17–55 are enriched in basic and acidic residues; it reads SGERDSADITEHEQMDVKPKTNGDSKADRKAANAKDPSR. The segment at residues 65 to 93 is a DNA-binding region (zn(2)-C6 fungal-type); the sequence is CFACQRAHLTCGDERPCQRCIKRGLQDAC. Disordered stretches follow at residues 126-240, 276-300, and 552-582; these read TLRN…GPFF, AAGD…AQFS, and TGGS…GTGR. Residues 132–141 show a composition bias toward polar residues; that stretch reads PISRNGTNAV. The segment covering 142–171 has biased composition (low complexity); that stretch reads NSNQQHSQQHPQQPTNPTNNNFYPTPQTQT. Composition is skewed to polar residues over residues 172 to 234, 281 to 300, and 552 to 581; these read GSYN…SQNP, PTDS…AQFS, and TGGS…SGTG.

It belongs to the ERT1/acuK family.

It is found in the nucleus. Transcription factor which regulates nonfermentable carbon utilization. Activator of gluconeogenetic genes. The chain is Transcription activator of gluconeogenesis Pc22g08580 from Penicillium rubens (strain ATCC 28089 / DSM 1075 / NRRL 1951 / Wisconsin 54-1255) (Penicillium chrysogenum).